A 669-amino-acid polypeptide reads, in one-letter code: RNA-binding protein 14 (669 aa).

2 RRM domains span residues 1–73 (MKIF…MSRP) and 79–149 (WKIF…LSTK). Glycyl lysine isopeptide (Lys-Gly) (interchain with G-Cter in SUMO2) cross-links involve residues lysine 126, lysine 135, lysine 138, lysine 149, and lysine 153. 2 disordered regions span residues 147–175 (STKG…DTAF) and 193–232 (NSTG…PLTA). Serine 161 carries the phosphoserine modification. At lysine 164 the chain carries N6-acetyllysine; alternate. Residue lysine 164 forms a Glycyl lysine isopeptide (Lys-Gly) (interchain with G-Cter in SUMO2); alternate linkage. The residue at position 206 (threonine 206) is a Phosphothreonine. Phosphoserine occurs at positions 220, 242, 244, 256, 272, and 280. The segment at 284 to 303 (PYRGQLASPSSQSAAASSLG) is disordered. Residues 287-303 (GQLASPSSQSAAASSLG) are compositionally biased toward low complexity. The segment at 307 to 354 (GAQPSASALSSYGGQAAAASSLNSYGAQGSSLASYGNQPSSYGAQAAS) is TRBP-interacting domain; interaction with STIL. Residues serine 520, serine 523, serine 527, and serine 562 each carry the phosphoserine modification. Residues 566–592 (VANANSTPPPYERTRLSPPRASYDDPY) form a disordered region. Threonine 572 bears the Phosphothreonine mark. The residue at position 582 (serine 582) is a Phosphoserine. Lysine 600 is covalently cross-linked (Glycyl lysine isopeptide (Lys-Gly) (interchain with G-Cter in SUMO2)). A phosphoserine mark is found at serine 618, serine 620, serine 623, serine 627, serine 643, and serine 649.

Interacts with NCOA6, CITED1 and XRCC5/KU86. Interacts with SS18. Interacts with STIL and interferes with its interaction with CPAP. Interacts with gamma-tubulin. Part of the HDP-RNP complex composed of at least HEXIM1, PRKDC, XRCC5, XRCC6, paraspeckle proteins (SFPQ, NONO, PSPC1, RBM14, and MATR3) and NEAT1 RNA.

It is found in the nucleus. Its subcellular location is the nucleolus. It localises to the cytoplasm. May function as a nuclear receptor coactivator, enhancing transcription through other coactivators such as NCOA6 and CITED1. Regulates centriole biogenesis by suppressing the formation of aberrant centriolar protein complexes in the cytoplasm and thus preserving mitotic spindle integrity. Prevents the formation of the STIL-CPAP complex (which can induce the formation of aberrant centriolar protein complexes) by interfering with the interaction of STIL with CPAP. Plays a role in the regulation of DNA virus-mediated innate immune response by assembling into the HDP-RNP complex, a complex that serves as a platform for IRF3 phosphorylation and subsequent innate immune response activation through the cGAS-STING pathway. This is RNA-binding protein 14 (RBM14) from Pongo abelii (Sumatran orangutan).